Here is a 440-residue protein sequence, read N- to C-terminus: Glycerophosphocholine cholinephosphodiesterase ENPP6 (440 aa).

The first 22 residues, 1-22, serve as a signal peptide directing secretion; the sequence is MAGKLWTFLLLFGFSWVWPASA. Residues Asp-32, Ser-71, and Asn-92 each contribute to the substrate site. Residues Asp-32 and Ser-71 each coordinate Zn(2+). Ser-71 acts as the Nucleophile in catalysis. Ser-71 is modified (phosphoserine). N-linked (GlcNAc...) asparagine glycans are attached at residues Asn-100 and Asn-118. Cys-142 and Cys-154 form a disulfide bridge. Residue Asp-193 coordinates substrate. Zn(2+) contacts are provided by Asp-193, His-197, Asp-240, and His-241. Residue His-241 participates in substrate binding. Asn-341 carries N-linked (GlcNAc...) asparagine glycosylation. His-354 contacts substrate. A Zn(2+)-binding site is contributed by His-354. An N-linked (GlcNAc...) asparagine glycan is attached at Asn-404. Ser-419 is lipidated: GPI-anchor amidated serine. Residues 420–440 constitute a propeptide, removed in mature form; sequence SSPSIPPNSCALVLILLLYFV.

The protein belongs to the nucleotide pyrophosphatase/phosphodiesterase family. In terms of assembly, homodimer; disulfide-linked. Homotetramer. Zn(2+) is required as a cofactor.

It localises to the cell membrane. It carries out the reaction sn-glycerol 3-phosphocholine + H2O = phosphocholine + glycerol + H(+). The catalysed reaction is a 1-acyl-sn-glycero-3-phosphocholine + H2O = a 1-acyl-sn-glycerol + phosphocholine + H(+). The enzyme catalyses a 1-O-alkyl-sn-glycero-3-phosphocholine + H2O = a 1-O-alkyl-sn-glycerol + phosphocholine + H(+). It catalyses the reaction 1-dodecanoyl-sn-glycero-3-phosphocholine + H2O = 1-dodecanoyl-sn-glycerol + phosphocholine + H(+). It carries out the reaction 1-hexadecanoyl-sn-glycero-3-phosphocholine + H2O = 1-hexadecanoyl-sn-glycerol + phosphocholine + H(+). The catalysed reaction is 1-(5Z,8Z,11Z,14Z-eicosatetraenoyl)-sn-glycero-3-phosphocholine + H2O = 1-(5Z,8Z,11Z,14Z-eicosatetraenoyl)-sn-glycerol + phosphocholine + H(+). The enzyme catalyses 1-tetradecanoyl-sn-glycero-3-phosphocholine + H2O = 1-tetradecanoyl-sn-glycerol + phosphocholine + H(+). It catalyses the reaction sphing-4-enine-phosphocholine + H2O = sphing-4-enine + phosphocholine + H(+). It carries out the reaction 1-(9Z-octadecenoyl)-sn-glycero-3-phosphocholine + H2O = 1-(9Z-octadecenoyl)-sn-glycerol + phosphocholine + H(+). The catalysed reaction is 1-(9Z,12Z)-octadecadienoyl-sn-glycero-3-phosphocholine + H2O = 1-(9Z,12Z-octadecadienoyl)-sn-glycerol + phosphocholine + H(+). The enzyme catalyses glycero-2-phosphocholine + H2O = phosphocholine + glycerol + H(+). With respect to regulation, inhibited by EDTA and EGTA in vitro. In terms of biological role, choline-specific glycerophosphodiesterase that hydrolyzes glycerophosphocholine (GPC) and lysophosphatidylcholine (LPC) and contributes to supplying choline to the cells. Has a preference for LPC with short (12:0 and 14:0) or polyunsaturated (18:2 and 20:4) fatty acids. In vitro, hydrolyzes only choline-containing lysophospholipids, such as sphingosylphosphorylcholine (SPC), platelet-activating factor (PAF) and lysoPAF, but not other lysophospholipids. The sequence is that of Glycerophosphocholine cholinephosphodiesterase ENPP6 from Rattus norvegicus (Rat).